Consider the following 89-residue polypeptide: Chromosomal protein MC1a (89 aa).

Protects DNA against thermal denaturation and modulates transcription. This is Chromosomal protein MC1a from Methanothrix soehngenii (Methanosaeta concilii).